The chain runs to 1066 residues: Exportin-T (1066 aa).

This sequence belongs to the exportin family.

The protein resides in the nucleus. The protein localises to the cytoplasm. TRNA nucleus export receptor which facilitates tRNA translocation across the nuclear pore complex. Involved in pre-tRNA splicing, probably by affecting the interaction of pre-tRNA with splicing endonuclease. The chain is Exportin-T (LOS1) from Laccaria bicolor (strain S238N-H82 / ATCC MYA-4686) (Bicoloured deceiver).